The following is a 279-amino-acid chain: L-ascorbate peroxidase 5, peroxisomal (279 aa).

Catalysis depends on His39, which acts as the Proton acceptor. The disordered stretch occupies residues 111–134 (PFTPGRKDADSADDGELPNPNEGA). His158 lines the heme b pocket. Thr159, Thr175, and Asp182 together coordinate K(+). A helical membrane pass occupies residues 251-271 (AVTQQTLGIAVAAAVVIFTIC). The AKR2A-binding sequence (ABS) required for peroxisome membrane targeting signature appears at 272 to 279 (YEASRRGK).

This sequence belongs to the peroxidase family. Ascorbate peroxidase subfamily. As to quaternary structure, interacts with AKR2A and AKR2B. It depends on heme b as a cofactor.

The protein localises to the peroxisome membrane. It carries out the reaction L-ascorbate + H2O2 = L-dehydroascorbate + 2 H2O. In terms of biological role, plays a key role in hydrogen peroxide removal. This is L-ascorbate peroxidase 5, peroxisomal (APX5) from Arabidopsis thaliana (Mouse-ear cress).